The primary structure comprises 521 residues: Glucose-1-phosphate adenylyltransferase small subunit, chloroplastic/amyloplastic (521 aa).

The segment at 1-32 (MAASIGALKSSPSSNNCINERRNDSTRAVSSR) is disordered. A chloroplast-targeting transit peptide spans 1-72 (MAASIGALKS…RSPMIVSPKA (72 aa)). Lysine 268 contacts substrate. Residues 444 to 454 (TDADRKLLAAK) are allosteric regulation.

The protein belongs to the bacterial/plant glucose-1-phosphate adenylyltransferase family. As to quaternary structure, heterotetramer. Leaves and tubers.

It is found in the plastid. Its subcellular location is the chloroplast. It localises to the amyloplast. The enzyme catalyses alpha-D-glucose 1-phosphate + ATP + H(+) = ADP-alpha-D-glucose + diphosphate. The protein operates within glycan biosynthesis; starch biosynthesis. Activated by 3'phosphoglycerate, inhibited by orthophosphate. Allosteric regulation. This protein plays a role in synthesis of starch. It catalyzes the synthesis of the activated glycosyl donor, ADP-glucose from Glc-1-P and ATP. This is Glucose-1-phosphate adenylyltransferase small subunit, chloroplastic/amyloplastic from Solanum tuberosum (Potato).